The primary structure comprises 179 residues: NADH dehydrogenase [ubiquinone] 1 beta subcomplex subunit 9 (179 aa).

Ala-2 bears the N-acetylalanine mark. Residue Ser-85 is modified to Phosphoserine.

Belongs to the complex I LYR family. In terms of assembly, mammalian complex I is composed of 45 different subunits.

It localises to the mitochondrion inner membrane. In terms of biological role, accessory subunit of the mitochondrial membrane respiratory chain NADH dehydrogenase (Complex I), that is believed to be not involved in catalysis. Complex I functions in the transfer of electrons from NADH to the respiratory chain. The immediate electron acceptor for the enzyme is believed to be ubiquinone. This is NADH dehydrogenase [ubiquinone] 1 beta subcomplex subunit 9 (Ndufb9) from Mus musculus (Mouse).